The sequence spans 214 residues: Small ribosomal subunit protein eS6 (214 aa).

The protein belongs to the eukaryotic ribosomal protein eS6 family.

This is Small ribosomal subunit protein eS6 from Saccharolobus solfataricus (strain ATCC 35092 / DSM 1617 / JCM 11322 / P2) (Sulfolobus solfataricus).